The primary structure comprises 147 residues: MAGGKSPKGMFAARKLRLKRLKFRWHQRKFKRRMLKLKEKFDPLEGAPMARGVVLEKVGIESRQPNSAVRKAVRVQLVKNGRIVTAFVPGDGGVNFIDEHDEVVIAGIGGTLGRSMGDLPGVRYKVIMVNGVSLDALYKGKKQKPVR.

The protein belongs to the universal ribosomal protein uS12 family. In terms of assembly, part of the 30S ribosomal subunit.

With S4 and S5 plays an important role in translational accuracy. Located at the interface of the 30S and 50S subunits. The polypeptide is Small ribosomal subunit protein uS12 (Sulfurisphaera tokodaii (strain DSM 16993 / JCM 10545 / NBRC 100140 / 7) (Sulfolobus tokodaii)).